Here is a 533-residue protein sequence, read N- to C-terminus: MDPVLKDEIEKRRTFAIISHPDAGKTTLTEKLLLKGGAIHEAGEIKARKADRFAMSDWMTMEKERGISVTSSVMKFPYRGYELNLLDTPGHRDFSEDTYRVLTAADSVIMVLDNASGVEQQTEKLMEVCRMQDTPIITFVNKMDRHGLPPLDILEDIEDTLDLDTVPLSWPIGMGNRFRGTYNLYRDELHLFSHADMDGEHERLPIDDLDDPQLDEVLGDQADDLRFDVELVREAGDELDLQAYLGGKQTPVFFGSALSNFGVGDMFDTFVEIAPPPQPRPTVTRDVSPYEDDFTGVAFKIQANMDPKHHDRMAFVRVCSGKFEKGMEVIHHRTGQTMRLNNATTFMAQDREGVDTAYPGDIIGIMSHGRVKIGDSFSTAEPLHFTGVPSFAPEHFRKVRLDDPFRSKHLSKGLQQLSEEGTIQAFRPLRGNDYILGAVGELQFDVTLDRLEDEYNVDAHLTGVRYACCRWIDGPAEDLEDFEAENMDSLFRDAGGDLAYLALSDFRLERTMENWPRISFNSTKQHTAEEERS.

Residues 10–278 form the tr-type G domain; that stretch reads EKRRTFAIIS…TFVEIAPPPQ (269 aa). Residues 19–26, 87–91, and 141–144 each bind GTP; these read SHPDAGKT, DTPGH, and NKMD.

This sequence belongs to the TRAFAC class translation factor GTPase superfamily. Classic translation factor GTPase family. PrfC subfamily.

Its subcellular location is the cytoplasm. Its function is as follows. Increases the formation of ribosomal termination complexes and stimulates activities of RF-1 and RF-2. It binds guanine nucleotides and has strong preference for UGA stop codons. It may interact directly with the ribosome. The stimulation of RF-1 and RF-2 is significantly reduced by GTP and GDP, but not by GMP. This chain is Peptide chain release factor 3, found in Salinibacter ruber (strain DSM 13855 / M31).